Consider the following 428-residue polypeptide: Serine--tRNA ligase (428 aa).

L-serine is bound at residue 231-233 (TAE). ATP is bound at residue 262–264 (RSE). An L-serine-binding site is contributed by Glu285. ATP is bound at residue 349-352 (EISS). Position 385 (Ser385) interacts with L-serine.

Belongs to the class-II aminoacyl-tRNA synthetase family. Type-1 seryl-tRNA synthetase subfamily. In terms of assembly, homodimer. The tRNA molecule binds across the dimer.

The protein localises to the cytoplasm. It carries out the reaction tRNA(Ser) + L-serine + ATP = L-seryl-tRNA(Ser) + AMP + diphosphate + H(+). The enzyme catalyses tRNA(Sec) + L-serine + ATP = L-seryl-tRNA(Sec) + AMP + diphosphate + H(+). It functions in the pathway aminoacyl-tRNA biosynthesis; selenocysteinyl-tRNA(Sec) biosynthesis; L-seryl-tRNA(Sec) from L-serine and tRNA(Sec): step 1/1. Its function is as follows. Catalyzes the attachment of serine to tRNA(Ser). Is also able to aminoacylate tRNA(Sec) with serine, to form the misacylated tRNA L-seryl-tRNA(Sec), which will be further converted into selenocysteinyl-tRNA(Sec). This chain is Serine--tRNA ligase, found in Staphylococcus haemolyticus (strain JCSC1435).